Here is a 1046-residue protein sequence, read N- to C-terminus: Nuclear pore complex protein NUP96 (1046 aa).

The region spanning 51–187 (SPDYFLKPCI…GLWKFFVPHF (137 aa)) is the Peptidase S59 domain. Positions 283–295 (RNVRPSQKIAQRN) are enriched in polar residues. The segment at 283 to 304 (RNVRPSQKIAQRNSHQDPPPVV) is disordered. A Phosphoserine modification is found at S523.

Part of the nuclear pore complex (NPC). The NPC has an eight-fold symmetrical structure comprising a central transport channel and two rings, the cytoplasmic and nuclear rings, to which eight filaments are attached. The cytoplasmic filaments have loose ends, while the nuclear filaments are joined in a distal ring, forming a nuclear basket. NPCs are highly dynamic in configuration and composition, and can be devided in 3 subcomplexes, the NUP62 subcomplex, the NUP107-160 subcomplex and the NUP93 subcomplex, containing approximately 30 different nucleoporin proteins. In terms of tissue distribution, expressed in roots, leaves, stems, flowers and siliques.

It is found in the nucleus membrane. The protein localises to the nucleus. The protein resides in the nuclear pore complex. Functionally, contributes to the transfer of mature mRNA from the nucleus to the cytosol. Required for both R gene-mediated and basal disease resistance. RNA export seems to play a critical role in stress responses and regulation of plant growth and development. The polypeptide is Nuclear pore complex protein NUP96 (Arabidopsis thaliana (Mouse-ear cress)).